Here is a 287-residue protein sequence, read N- to C-terminus: Glycine--tRNA ligase alpha subunit (287 aa).

This sequence belongs to the class-II aminoacyl-tRNA synthetase family. Tetramer of two alpha and two beta subunits.

The protein resides in the cytoplasm. It carries out the reaction tRNA(Gly) + glycine + ATP = glycyl-tRNA(Gly) + AMP + diphosphate. The polypeptide is Glycine--tRNA ligase alpha subunit (Campylobacter jejuni subsp. jejuni serotype O:6 (strain 81116 / NCTC 11828)).